The following is a 383-amino-acid chain: Probable L-aspartate decarboxylase (383 aa).

Lys231 bears the N6-(pyridoxal phosphate)lysine mark.

Belongs to the group II decarboxylase family. MfnA subfamily. The cofactor is pyridoxal 5'-phosphate.

It carries out the reaction L-aspartate + H(+) = beta-alanine + CO2. The protein operates within cofactor biosynthesis; coenzyme A biosynthesis. Catalyzes the decarboxylation of L-aspartate to produce beta-alanine. The protein is Probable L-aspartate decarboxylase of Thermococcus gammatolerans (strain DSM 15229 / JCM 11827 / EJ3).